A 425-amino-acid polypeptide reads, in one-letter code: UDP-N-acetylglucosamine 1-carboxyvinyltransferase (425 aa).

Phosphoenolpyruvate is bound at residue 22-23; sequence KN. Arginine 98 provides a ligand contact to UDP-N-acetyl-alpha-D-glucosamine. Cysteine 122 acts as the Proton donor in catalysis. Residue cysteine 122 is modified to 2-(S-cysteinyl)pyruvic acid O-phosphothioketal. Residues 127–131, aspartate 313, and isoleucine 335 contribute to the UDP-N-acetyl-alpha-D-glucosamine site; that span reads RPVDQ.

This sequence belongs to the EPSP synthase family. MurA subfamily.

It localises to the cytoplasm. It catalyses the reaction phosphoenolpyruvate + UDP-N-acetyl-alpha-D-glucosamine = UDP-N-acetyl-3-O-(1-carboxyvinyl)-alpha-D-glucosamine + phosphate. It functions in the pathway cell wall biogenesis; peptidoglycan biosynthesis. In terms of biological role, cell wall formation. Adds enolpyruvyl to UDP-N-acetylglucosamine. In Xylella fastidiosa (strain M12), this protein is UDP-N-acetylglucosamine 1-carboxyvinyltransferase.